The following is a 255-amino-acid chain: MPAPALSGPQYLREGLKLVLSPGLRLFVLLPLAINLVLFVGLIYFAGHQFSLWVDHLMPTLPSWLSFLNYLLWPLFVVLVVLMVFFTFTMLANIIAAPFNGFLSEKVEVVVRGTDDFPAFSWGELIAMVPRTLAREMRKLGYFLPRAIGLFILSFIPVVNLIAAPLWLLFGVWMMAIQYIDYPADNHKLGWNEMLAWLRQKRWQSMSFGGIVYLVLLVPVVNLLMMPAAVAGATLFWVREQGAEAMAPQQKVTRS.

The next 4 membrane-spanning stretches (helical) occupy residues 26–46 (LFVL…IYFA), 71–91 (LLWP…FTML), 150–170 (LFIL…WLLF), and 211–231 (IVYL…AAVA).

This sequence belongs to the CysZ family.

It is found in the cell inner membrane. High affinity, high specificity proton-dependent sulfate transporter, which mediates sulfate uptake. Provides the sulfur source for the cysteine synthesis pathway. This chain is Sulfate transporter CysZ, found in Pseudomonas fluorescens (strain SBW25).